The sequence spans 236 residues: MAQYKRILLKLSGESLMGGKQYGIDEVRLNEYAAQIKEIAEMGVQIGIVIGGGNIFRGLSGASKGFDRVKGDQMGMLATVINSLALSSALVAQGVNAKVLTAIRMEPIGEFYNKWRAIELLEQGNVVIMSGGTGNPFFTTDTGSSLRGIEIEADVMLKGTRVDGIYTADPEKDPTATKFSDITYDEIYTRGLKVMDLTATTMCKENNLPIIVFDMDTNGNLKKVMSGENIGTLVHN.

10–13 contributes to the ATP binding site; it reads KLSG. G52 is a binding site for UMP. 2 residues coordinate ATP: G53 and R57. UMP is bound by residues D72 and 133–140; that span reads TGNPFFTT. T160, Y166, and D169 together coordinate ATP.

This sequence belongs to the UMP kinase family. Homohexamer.

It is found in the cytoplasm. It carries out the reaction UMP + ATP = UDP + ADP. The protein operates within pyrimidine metabolism; CTP biosynthesis via de novo pathway; UDP from UMP (UMPK route): step 1/1. Inhibited by UTP. In terms of biological role, catalyzes the reversible phosphorylation of UMP to UDP. This is Uridylate kinase from Parabacteroides distasonis (strain ATCC 8503 / DSM 20701 / CIP 104284 / JCM 5825 / NCTC 11152).